The chain runs to 338 residues: Ketol-acid reductoisomerase (NADP(+)) (338 aa).

The KARI N-terminal Rossmann domain maps to Met1–Thr181. NADP(+) is bound by residues Tyr24–Gln27, Arg47, and Ser52. His107 is an active-site residue. Gly133 contacts NADP(+). The KARI C-terminal knotted domain occupies Asn182–Ile327. Mg(2+) is bound by residues Asp190, Glu194, Glu226, and Glu230. Position 251 (Ser251) interacts with substrate.

This sequence belongs to the ketol-acid reductoisomerase family. It depends on Mg(2+) as a cofactor.

It catalyses the reaction (2R)-2,3-dihydroxy-3-methylbutanoate + NADP(+) = (2S)-2-acetolactate + NADPH + H(+). The catalysed reaction is (2R,3R)-2,3-dihydroxy-3-methylpentanoate + NADP(+) = (S)-2-ethyl-2-hydroxy-3-oxobutanoate + NADPH + H(+). Its pathway is amino-acid biosynthesis; L-isoleucine biosynthesis; L-isoleucine from 2-oxobutanoate: step 2/4. It participates in amino-acid biosynthesis; L-valine biosynthesis; L-valine from pyruvate: step 2/4. Its function is as follows. Involved in the biosynthesis of branched-chain amino acids (BCAA). Catalyzes an alkyl-migration followed by a ketol-acid reduction of (S)-2-acetolactate (S2AL) to yield (R)-2,3-dihydroxy-isovalerate. In the isomerase reaction, S2AL is rearranged via a Mg-dependent methyl migration to produce 3-hydroxy-3-methyl-2-ketobutyrate (HMKB). In the reductase reaction, this 2-ketoacid undergoes a metal-dependent reduction by NADPH to yield (R)-2,3-dihydroxy-isovalerate. This is Ketol-acid reductoisomerase (NADP(+)) from Cupriavidus necator (strain ATCC 17699 / DSM 428 / KCTC 22496 / NCIMB 10442 / H16 / Stanier 337) (Ralstonia eutropha).